Consider the following 257-residue polypeptide: Transmembrane protein C257L (257 aa).

Helical transmembrane passes span 123–143 (LELL…FTAL) and 163–183 (MMIF…YVLV).

The protein belongs to the asfivirus C257R family.

It localises to the host membrane. It is found in the virion. The sequence is that of Transmembrane protein C257L from African swine fever virus (isolate Warthog/Namibia/Wart80/1980) (ASFV).